A 315-amino-acid chain; its full sequence is 10-epi-cubebol synthase (315 aa).

4 residues coordinate Mg(2+): Asp79, Asn220, Ser224, and Glu228. A DDXXD motif motif is present at residues 79–83 (DDVCE). Residues 220–228 (NDIYSLRKE) carry the NXXXSXXXE motif motif.

The protein belongs to the terpene synthase family. Requires Mg(2+) as cofactor.

The enzyme catalyses (2E,6E)-farnesyl diphosphate + H2O = 10-epi-cubebol + diphosphate. Functionally, catalyzes the cyclization of farnesyl diphosphate (FPP) to 10-epi-cubebol. Is also responsible for the formation of many other sesquiterpenes, mainly cadalanes and cubebanes, including 1,10-di-epi-cubebol and the cadalanes delta-cadinene, T-cadinol and alpha-cadinol. The sequence is that of 10-epi-cubebol synthase from Sorangium cellulosum (strain So ce56) (Polyangium cellulosum (strain So ce56)).